The following is a 245-amino-acid chain: Uridylate kinase (245 aa).

14-17 (KLSG) provides a ligand contact to ATP. Residue G56 coordinates UMP. ATP-binding residues include G57 and R61. UMP contacts are provided by residues D76 and 137 to 144 (TGLPFFTT). The ATP site is built by T164, Y170, and D173.

It belongs to the UMP kinase family. As to quaternary structure, homohexamer.

It is found in the cytoplasm. The catalysed reaction is UMP + ATP = UDP + ADP. The protein operates within pyrimidine metabolism; CTP biosynthesis via de novo pathway; UDP from UMP (UMPK route): step 1/1. Inhibited by UTP. Its function is as follows. Catalyzes the reversible phosphorylation of UMP to UDP. This Syntrophobacter fumaroxidans (strain DSM 10017 / MPOB) protein is Uridylate kinase.